A 233-amino-acid chain; its full sequence is TDEITSFSIPKFRPDQPNLIFQGGGYTTKEKLTLTKAVKNTVGRALYSLPIHIWDSETGNVADFTTTFIFVIDAPNGYNVADGFTFFIAPVDTKPQTGGGYLGVFNGKDYDKTAQTVAVEFDTFYNAAWDPSNGKRHIGIDVNTIKSISTKSWNLQNGEEAHVAISFNATTNVLSVTLLYPNLTGYTLSEVVPLKDVVPEWVRIGFSATTGAEYATHEVLSWTFLSELTGPSN.

2 residues coordinate Mn(2+): Glu-120 and Asp-122. Ca(2+) is bound by residues Asp-122, Phe-124, Asn-126, and Asp-130. Residues Asp-130 and His-137 each contribute to the Mn(2+) site. N-linked (GlcNAc...) asparagine glycosylation is present at Asn-168.

Belongs to the leguminous lectin family. As to quaternary structure, heterodimer of an alpha and a beta chain.

The chain is Favin from Vicia faba (Broad bean).